Here is a 312-residue protein sequence, read N- to C-terminus: Phosphoribosylaminoimidazole-succinocarboxamide synthase (312 aa).

This sequence belongs to the SAICAR synthetase family.

The enzyme catalyses 5-amino-1-(5-phospho-D-ribosyl)imidazole-4-carboxylate + L-aspartate + ATP = (2S)-2-[5-amino-1-(5-phospho-beta-D-ribosyl)imidazole-4-carboxamido]succinate + ADP + phosphate + 2 H(+). It participates in purine metabolism; IMP biosynthesis via de novo pathway; 5-amino-1-(5-phospho-D-ribosyl)imidazole-4-carboxamide from 5-amino-1-(5-phospho-D-ribosyl)imidazole-4-carboxylate: step 1/2. The protein is Phosphoribosylaminoimidazole-succinocarboxamide synthase of Legionella pneumophila (strain Paris).